A 327-amino-acid polypeptide reads, in one-letter code: Cyclic AMP-responsive element-binding protein 1 (327 aa).

Disordered stretches follow at residues 1–26 (MTME…QQMT) and 94–113 (SEDS…RREI). One can recognise a KID domain in the interval 87–146 (QISTIAESEDSQESVDSVTDSQKRREILSRRPSYRKILNDLSSDAPGVPRIEEEKSEEET). Ser119 bears the Phosphoserine; by CaMK1, CaMK2, CaMK4, PKB/AKT1 or PKB/AKT2, RPS6KA3, RPS6KA4, RPS6KA5, SGK1 and TSSK4 mark. Residue Lys122 forms a Glycyl lysine isopeptide (Lys-Gly) (interchain with G-Cter in SUMO2) linkage. Residues 125 to 148 (NDLSSDAPGVPRIEEEKSEEETSA) are disordered. Ser128 carries the post-translational modification Phosphoserine. Ser257 carries the phosphoserine; by HIPK2 modification. A bZIP domain is found at 269–327 (ARKREVRLMKNREAARECRRKKKEYVKCLENRVAVLENQNKTLIEELKALKDLYCHKSD). The interval 270-295 (RKREVRLMKNREAARECRRKKKEYVK) is basic motif. Residues Lys271 and Lys290 each participate in a glycyl lysine isopeptide (Lys-Gly) (interchain with G-Cter in SUMO1) cross-link. Residues 297–318 (LENRVAVLENQNKTLIEELKAL) are leucine-zipper.

The protein belongs to the bZIP family. Interacts with PPRC1. Binds DNA as a dimer. This dimer is stabilized by magnesium ions. Interacts, through the bZIP domain, with the coactivators CRTC1/TORC1, CRTC2/TORC2 and CRTC3/TORC3. When phosphorylated on Ser-119, binds CREBBP. Interacts with CREBL2; regulates CREB1 phosphorylation, stability and transcriptional activity. Interacts (phosphorylated form) with TOX3. Interacts with ARRB1. Binds to HIPK2. Interacts with SGK1. Interacts with TSSK4; this interaction facilitates phosphorylation on Ser-119. Forms a complex with KMT2A and CREBBP. Interacts with TOX4; CREB1 is required for full induction of TOX4-dependent activity and the interaction is increased by cAMP and inhibited by insulin. In terms of assembly, (Microbial infection) Interacts with hepatitis B virus/HBV protein X. As to quaternary structure, (Microbial infection) Interacts with HTLV-1 protein Tax. Stimulated by phosphorylation. Phosphorylation of both Ser-119 and Ser-128 in the SCN regulates the activity of CREB and participates in circadian rhythm generation. Phosphorylation of Ser-119 allows CREBBP binding. In liver, phosphorylation is induced by fasting or glucagon in a circadian fashion. CREBL2 positively regulates phosphorylation at Ser-119 thereby stimulating CREB1 transcriptional activity. Phosphorylated upon calcium influx by CaMK4 and CaMK2 on Ser-119. CaMK4 is much more potent than CaMK2 in activating CREB. Phosphorylated by CaMK2 on Ser-128. Phosphorylation of Ser-128 blocks CREB-mediated transcription even when Ser-119 is phosphorylated. Phosphorylated by CaMK1. Phosphorylation of Ser-257 by HIPK2 in response to genotoxic stress promotes CREB1 activity, facilitating the recruitment of the coactivator CBP. Phosphorylated at Ser-119 by RPS6KA3, RPS6KA4 and RPS6KA5 in response to mitogenic or stress stimuli. Phosphorylated by TSSK4 on Ser-119. In terms of processing, sumoylated with SUMO1. Sumoylation on Lys-290, but not on Lys-271, is required for nuclear localization of this protein. Sumoylation is enhanced under hypoxia, promoting nuclear localization and stabilization.

The protein localises to the nucleus. Functionally, phosphorylation-dependent transcription factor that stimulates transcription upon binding to the DNA cAMP response element (CRE), a sequence present in many viral and cellular promoters. Transcription activation is enhanced by the TORC coactivators which act independently of Ser-119 phosphorylation. Involved in different cellular processes including the synchronization of circadian rhythmicity and the differentiation of adipose cells. Regulates the expression of apoptotic and inflammatory response factors in cardiomyocytes in response to ERFE-mediated activation of AKT signaling. This is Cyclic AMP-responsive element-binding protein 1 (CREB1) from Homo sapiens (Human).